Consider the following 355-residue polypeptide: Peptide chain release factor 1 (355 aa).

Glutamine 232 is subject to N5-methylglutamine.

It belongs to the prokaryotic/mitochondrial release factor family. In terms of processing, methylated by PrmC. Methylation increases the termination efficiency of RF1.

It localises to the cytoplasm. In terms of biological role, peptide chain release factor 1 directs the termination of translation in response to the peptide chain termination codons UAG and UAA. This is Peptide chain release factor 1 from Thermobifida fusca (strain YX).